A 201-amino-acid polypeptide reads, in one-letter code: L(+)-tartrate dehydratase subunit beta (201 aa).

H37 is a catalytic residue.

This sequence belongs to the class-I fumarase family. As to quaternary structure, heterotetramer of two alpha and two beta subunits.

It carries out the reaction (2R,3R)-tartrate = oxaloacetate + H2O. This Shigella sonnei (strain Ss046) protein is L(+)-tartrate dehydratase subunit beta (ttdB).